We begin with the raw amino-acid sequence, 634 residues long: Pheromone-processing carboxypeptidase KEX1 (634 aa).

The first 24 residues, 1–24, serve as a signal peptide directing secretion; the sequence is MKLAMRRASTFALLALSWSAAVSA. Residues 25–512 lie on the Lumenal side of the membrane; it reads ASSAGDYFVR…DEAKWYAYRK (488 aa). Catalysis depends on residues Ser177 and Asp378. An N-linked (GlcNAc...) asparagine glycan is attached at Asn429. His440 is a catalytic residue. Residues 468–498 form a disordered region; it reads NPTDSRLDGEKLPETTVGGAAGNSTSKQEEE. Asn490 carries an N-linked (GlcNAc...) asparagine glycan. A helical membrane pass occupies residues 513 to 533; sequence SGEVVLVIVAVAAVAWGWYVW. Over 534 to 634 the chain is Cytoplasmic; the sequence is RDRRRRRGYQ…EGGPSGGRGR (101 aa). The segment at 542–634 is disordered; sequence YQGIFGGSPS…EGGPSGGRGR (93 aa).

It belongs to the peptidase S10 family.

The protein localises to the golgi apparatus. It is found in the trans-Golgi network membrane. It carries out the reaction Preferential release of a C-terminal arginine or lysine residue.. Protease with a carboxypeptidase B-like function involved in the C-terminal processing of the lysine and arginine residues from protein precursors. Promotes cell fusion and is involved in the programmed cell death. This is Pheromone-processing carboxypeptidase KEX1 (KEX1) from Pyricularia oryzae (strain 70-15 / ATCC MYA-4617 / FGSC 8958) (Rice blast fungus).